Consider the following 438-residue polypeptide: Dol-P-Man:Man(5)GlcNAc(2)-PP-Dol alpha-1,3-mannosyltransferase (438 aa).

Phosphoserine is present on Ser-13. 11 consecutive transmembrane segments (helical) span residues 41–61 (YTLL…FWVI), 95–115 (TGPL…FYAT), 123–143 (MAQN…FLIY), 149–169 (VPPF…SIFV), 172–192 (LFND…FLAQ), 203–223 (LAVS…FLLL), 231–251 (ALPK…PFLL), 289–309 (FHLA…LCRW), 332–352 (ALTP…GICF), 356–376 (LHYQ…WAMP), and 407–427 (AALH…PESF).

This sequence belongs to the glycosyltransferase ALG3 family.

It is found in the endoplasmic reticulum membrane. It catalyses the reaction an alpha-D-Man-(1-&gt;2)-alpha-D-Man-(1-&gt;2)-alpha-D-Man-(1-&gt;3)-[alpha-D-Man-(1-&gt;6)]-beta-D-Man-(1-&gt;4)-beta-D-GlcNAc-(1-&gt;4)-alpha-D-GlcNAc-diphospho-di-trans,poly-cis-dolichol + a di-trans,poly-cis-dolichyl beta-D-mannosyl phosphate = an alpha-D-Man-(1-&gt;2)-alpha-D-Man-(1-&gt;2)-alpha-D-Man-(1-&gt;3)-[alpha-D-Man-(1-&gt;3)-alpha-D-Man-(1-&gt;6)]-beta-D-Man-(1-&gt;4)-beta-D-GlcNAc-(1-&gt;4)-alpha-D-GlcNAc-diphospho-di-trans,poly-cis-dolichol + a di-trans,poly-cis-dolichyl phosphate + H(+). The protein operates within protein modification; protein glycosylation. In terms of biological role, dol-P-Man:Man(5)GlcNAc(2)-PP-Dol alpha-1,3-mannosyltransferase that operates in the biosynthetic pathway of dolichol-linked oligosaccharides, the glycan precursors employed in protein asparagine (N)-glycosylation. The assembly of dolichol-linked oligosaccharides begins on the cytosolic side of the endoplasmic reticulum membrane and finishes in its lumen. The sequential addition of sugars to dolichol pyrophosphate produces dolichol-linked oligosaccharides containing fourteen sugars, including two GlcNAcs, nine mannoses and three glucoses. Once assembled, the oligosaccharide is transferred from the lipid to nascent proteins by oligosaccharyltransferases. In the lumen of the endoplasmic reticulum, adds the first dolichyl beta-D-mannosyl phosphate derived mannose in an alpha-1,3 linkage to Man(5)GlcNAc(2)-PP-dolichol to produce Man(6)GlcNAc(2)-PP-dolichol. Man(6)GlcNAc(2)-PP-dolichol is a substrate for ALG9, the following enzyme in the biosynthetic pathway. The chain is Dol-P-Man:Man(5)GlcNAc(2)-PP-Dol alpha-1,3-mannosyltransferase from Mus musculus (Mouse).